Consider the following 422-residue polypeptide: UDP-N-acetylglucosamine 1-carboxyvinyltransferase (422 aa).

Position 22–23 (22–23) interacts with phosphoenolpyruvate; the sequence is KN. Position 93 (Arg93) interacts with UDP-N-acetyl-alpha-D-glucosamine. The Proton donor role is filled by Cys117. A 2-(S-cysteinyl)pyruvic acid O-phosphothioketal modification is found at Cys117. UDP-N-acetyl-alpha-D-glucosamine-binding positions include 122–126, Asp308, and Leu330; that span reads RPVDL.

This sequence belongs to the EPSP synthase family. MurA subfamily.

The protein localises to the cytoplasm. The catalysed reaction is phosphoenolpyruvate + UDP-N-acetyl-alpha-D-glucosamine = UDP-N-acetyl-3-O-(1-carboxyvinyl)-alpha-D-glucosamine + phosphate. The protein operates within cell wall biogenesis; peptidoglycan biosynthesis. Cell wall formation. Adds enolpyruvyl to UDP-N-acetylglucosamine. The protein is UDP-N-acetylglucosamine 1-carboxyvinyltransferase of Helicobacter pylori (strain P12).